A 123-amino-acid chain; its full sequence is WAP four-disulfide core domain protein 5 (123 aa).

Positions 1–24 (MRFWSLFLLVVLLAVGGQLPAASG) are cleaved as a signal peptide. WAP domains are found at residues 27–74 (KGER…VPRI) and 75–121 (LVKR…RDPA). 8 disulfide bridges follow: C34–C62, C41–C66, C49–C61, C55–C70, C81–C109, C88–C113, C96–C108, and C102–C117.

The protein resides in the secreted. Functionally, putative acid-stable proteinase inhibitor. This chain is WAP four-disulfide core domain protein 5 (WFDC5), found in Lemur catta (Ring-tailed lemur).